A 719-amino-acid chain; its full sequence is Plasmin and fibronectin-binding protein A (719 aa).

The signal sequence occupies residues 1-45 (MLKIVKKLEVLMKYFVPNEVFSIRKLKVGTCSVLLAISILGSQGI). 2 disordered regions span residues 56 to 76 (PMATKESSNAITNDLDNSPTV) and 109 to 128 (IRSNSQLDNRTVESTVTSTN). PbH1 repeat units follow at residues 287–310 (SNNVTIKNVTFKDSYQGHAIQIAG), 362–384 (SENVTIQNSYFGKSDKSGELVTA), 397–419 (PSNIKILNNHFDNMMYAGVRFTG), 497–523 (VSDITVTKNVINNNSKETEQPNIELLR), and 525–546 (SDNLVVSENSIFGGKEGIVIED). Positions 601–658 (NNLSDKNEKEKNKEEKQSNSNNVIDSNQKNGEFNSSKDNRQMNDKIDNKQDNKTEEVN) form a coiled coil. Positions 606–617 (KNEKEKNKEEKQ) are enriched in basic and acidic residues. A disordered region spans residues 606–655 (KNEKEKNKEEKQSNSNNVIDSNQKNGEFNSSKDNRQMNDKIDNKQDNKTE). A compositionally biased stretch (polar residues) spans 623-634 (VIDSNQKNGEFN). Over residues 635–655 (SSKDNRQMNDKIDNKQDNKTE) the composition is skewed to basic and acidic residues. An LPXTG sorting signal motif is present at residues 685–689 (LPKTG). Threonine 688 bears the Pentaglycyl murein peptidoglycan amidated threonine mark. Residues 689 to 719 (GSNKIMELFLTVTGIGLLLTLKGLKYYGKDK) constitute a propeptide, removed by sortase.

It localises to the secreted. It is found in the cell wall. Functionally, acts as a fibronectin-dependent adhesin and invasin. Binds host (in this case human) fibronectin, plasmin, plasminogen, and human serum albumin. Where the bacteria adhere to human cells there is major recruitment of microvilli which seem to fuse to cover the streptococcal chains. Antibodies to this protein reduce bacterial growth in human blood. The protein is Plasmin and fibronectin-binding protein A (pfbA) of Streptococcus pneumoniae (strain ATCC BAA-255 / R6).